The following is a 110-amino-acid chain: Cytochrome c oxidase subunit 4B (110 aa).

3 helical membrane passes run M29 to E49, F55 to F75, and F89 to W109.

Belongs to the cytochrome c oxidase bacterial subunit 4 family.

It is found in the cell membrane. It carries out the reaction 4 Fe(II)-[cytochrome c] + O2 + 8 H(+)(in) = 4 Fe(III)-[cytochrome c] + 2 H2O + 4 H(+)(out). In Bacillus sp. (strain PS3), this protein is Cytochrome c oxidase subunit 4B (caaD).